The primary structure comprises 365 residues: UBX domain-containing protein 2B (365 aa).

The segment at 1-97 (MADGGASPAQ…MSDDKENQRF (97 aa)) is disordered. Basic and acidic residues-rich tracts occupy residues 50–63 (DEAK…DKPT) and 73–95 (LKID…KENQ). In terms of domain architecture, SEP spans 175–240 (DVQILLKLWR…MEDHQEQEYV (66 aa)). A UBX domain is found at 286–363 (DSVPATKIQI…DILNTVILQQ (78 aa)).

It belongs to the NSFL1C family.

It is found in the nucleus. Its subcellular location is the cytoplasm. It localises to the cytosol. The protein resides in the endoplasmic reticulum. The protein localises to the golgi apparatus. It is found in the cytoskeleton. Its subcellular location is the microtubule organizing center. It localises to the centrosome. Adapter protein required for Golgi and endoplasmic reticulum biogenesis. Involved in Golgi and endoplasmic reticulum maintenance during interphase and in their reassembly at the end of mitosis. Regulates the centrosomal levels of kinase AURKA/Aurora A during mitotic progression by promoting AURKA removal from centrosomes in prophase. Also, regulates spindle orientation during mitosis. This is UBX domain-containing protein 2B (UBXN2B) from Gallus gallus (Chicken).